The chain runs to 160 residues: Cytochrome b6-f complex subunit 4 (160 aa).

The next 3 membrane-spanning stretches (helical) occupy residues 36-56 (LLYMFPVVIFGSFACVIGLAV), 95-115 (LLGVLLMAAVPAGLLTVPFIE), and 131-151 (TVFLIGTFAAIWLGIGACLPI).

This sequence belongs to the cytochrome b family. PetD subfamily. As to quaternary structure, the 4 large subunits of the cytochrome b6-f complex are cytochrome b6, subunit IV (17 kDa polypeptide, petD), cytochrome f and the Rieske protein, while the 4 small subunits are petG, petL, petM and petN. The complex functions as a dimer.

The protein resides in the plastid. Its subcellular location is the chloroplast thylakoid membrane. Component of the cytochrome b6-f complex, which mediates electron transfer between photosystem II (PSII) and photosystem I (PSI), cyclic electron flow around PSI, and state transitions. In Tupiella akineta (Green alga), this protein is Cytochrome b6-f complex subunit 4.